We begin with the raw amino-acid sequence, 190 residues long: Protein E6C (190 aa).

The span at 1–15 (MFGVAKPPPSPIPKP) shows a compositional bias: pro residues. Disordered regions lie at residues 1 to 110 (MFGV…EGRR) and 160 to 190 (PRTPGPVAPIPELPGEADDPPTRTPPPPPDD). Residues 36-46 (ARQRASTRHRP) show a composition bias toward basic residues. 2 stretches are compositionally biased toward pro residues: residues 162–171 (TPGPVAPIPE) and 181–190 (TRTPPPPPDD).

This is Protein E6C (13) from Equus caballus (Horse).